A 264-amino-acid chain; its full sequence is tRNA pseudouridine synthase A (264 aa).

The Nucleophile role is filled by aspartate 56. Tyrosine 114 contacts substrate.

Belongs to the tRNA pseudouridine synthase TruA family. As to quaternary structure, homodimer.

It carries out the reaction uridine(38/39/40) in tRNA = pseudouridine(38/39/40) in tRNA. Functionally, formation of pseudouridine at positions 38, 39 and 40 in the anticodon stem and loop of transfer RNAs. The sequence is that of tRNA pseudouridine synthase A from Buchnera aphidicola subsp. Baizongia pistaciae (strain Bp).